Reading from the N-terminus, the 850-residue chain is Envelope glycoprotein gp160 (850 aa).

Positions 1 to 28 (METQTSWLSLWRWGLMIFGMLMICSARE) are cleaved as a signal peptide. Over 29–678 (NLWVTVYYGV…ISNWLWYIKI (650 aa)) the chain is Extracellular. The cysteines at positions 50 and 70 are disulfide-linked. 19 N-linked (GlcNAc...) asparagine; by host glycosylation sites follow: asparagine 84, asparagine 126, asparagine 133, asparagine 134, asparagine 139, asparagine 152, asparagine 156, asparagine 184, asparagine 193, asparagine 226, asparagine 230, asparagine 237, asparagine 258, asparagine 272, asparagine 285, asparagine 297, asparagine 327, asparagine 334, and asparagine 349. 5 cysteine pairs are disulfide-bonded: cysteine 115/cysteine 201, cysteine 122/cysteine 192, cysteine 127/cysteine 153, cysteine 214/cysteine 243, and cysteine 224/cysteine 235. The interval 127–152 (CSDVNSNNSTDSNSSASNNSPEIMKN) is V1. Residues 153–192 (CSFNVTTEIRNKRKQEYALFYRQDVVPINSDNKSYILINC) form a V2 region. The interval 292–325 (CTRPNNNTRKGIHMGPGQVLYATGEIIGDIRKAY) is V3. Residues cysteine 292 and cysteine 326 are joined by a disulfide bond. A CD4-binding loop region spans residues 357 to 367 (PSGGDIEITTH). 2 cysteine pairs are disulfide-bonded: cysteine 371-cysteine 436 and cysteine 378-cysteine 409. Positions 378 to 409 (CNTSTLFNSSWDENNIKDTNSTNDNTTITIPC) are V4. N-linked (GlcNAc...) asparagine; by host glycans are attached at residues asparagine 379, asparagine 385, asparagine 397, asparagine 402, asparagine 433, asparagine 439, asparagine 453, and asparagine 457. Residues 447-467 (RDGGNRNGSENGTETFRPTGG) form a disordered region. Polar residues predominate over residues 453–462 (NGSENGTETF). 2 V5 regions span residues 453–465 (NGSE…FRPT) and 454–465 (GSENGTETFRPT). The tract at residues 506-526 (AVGIGAVFLGFLGTAGSTMGA) is fusion peptide. Residues 568–586 (KQLQARVLAVERYLKDQQL) form an immunosuppression region. Cysteine 592 and cysteine 598 are oxidised to a cystine. N-linked (GlcNAc...) asparagine; by host glycosylation is found at asparagine 605, asparagine 610, asparagine 619, asparagine 631, and asparagine 668. A coiled-coil region spans residues 627–661 (REINNYTGIIYSLIEEAQNQQETNEKDLLALDKWT). The segment at 656–677 (ALDKWTNLWNWFNISNWLWYIK) is MPER; binding to GalCer. A helical transmembrane segment spans residues 679 to 699 (FIMIIGGLIGLRIIFAVLAIV). The Cytoplasmic portion of the chain corresponds to 700–850 (NRVRQGYSPL…IRQGLERALL (151 aa)). A YXXL motif; contains endocytosis signal motif is present at residues 706-709 (YSPL). Cysteine 758 carries S-palmitoyl cysteine; by host lipidation. Residues 849–850 (LL) carry the Di-leucine internalization motif motif.

This sequence belongs to the HIV-1 env protein family. As to quaternary structure, the mature envelope protein (Env) consists of a homotrimer of non-covalently associated gp120-gp41 heterodimers. The resulting complex protrudes from the virus surface as a spike. There seems to be as few as 10 spikes on the average virion. Interacts with host CD4, CCR5 and CXCR4. Gp120 also interacts with the C-type lectins CD209/DC-SIGN and CLEC4M/DC-SIGNR (collectively referred to as DC-SIGN(R)). Gp120 and gp41 interact with GalCer. Gp120 interacts with host ITGA4/ITGB7 complex; on CD4+ T-cells, this interaction results in rapid activation of integrin ITGAL/LFA-1, which facilitates efficient cell-to-cell spreading of HIV-1. Gp120 interacts with cell-associated heparan sulfate; this interaction increases virus infectivity on permissive cells and may be involved in infection of CD4- cells. In terms of assembly, the mature envelope protein (Env) consists of a homotrimer of non-covalently associated gp120-gp41 heterodimers. The resulting complex protrudes from the virus surface as a spike. There seems to be as few as 10 spikes on the average virion. Post-translationally, highly glycosylated by host. The high number of glycan on the protein is reffered to as 'glycan shield' because it contributes to hide protein sequence from adaptive immune system. Palmitoylation of the transmembrane protein and of Env polyprotein (prior to its proteolytic cleavage) is essential for their association with host cell membrane lipid rafts. Palmitoylation is therefore required for envelope trafficking to classical lipid rafts, but not for viral replication. In terms of processing, specific enzymatic cleavages in vivo yield mature proteins. Envelope glycoproteins are synthesized as an inactive precursor that is heavily N-glycosylated and processed likely by host cell furin in the Golgi to yield the mature SU and TM proteins. The cleavage site between SU and TM requires the minimal sequence [KR]-X-[KR]-R. About 2 of the 9 disulfide bonds of gp41 are reduced by P4HB/PDI, following binding to CD4 receptor.

It is found in the virion membrane. The protein localises to the host cell membrane. It localises to the host endosome membrane. Functionally, oligomerizes in the host endoplasmic reticulum into predominantly trimers. In a second time, gp160 transits in the host Golgi, where glycosylation is completed. The precursor is then proteolytically cleaved in the trans-Golgi and thereby activated by cellular furin or furin-like proteases to produce gp120 and gp41. In terms of biological role, attaches the virus to the host lymphoid cell by binding to the primary receptor CD4. This interaction induces a structural rearrangement creating a high affinity binding site for a chemokine coreceptor like CXCR4 and/or CCR5. Acts as a ligand for CD209/DC-SIGN and CLEC4M/DC-SIGNR, which are respectively found on dendritic cells (DCs), and on endothelial cells of liver sinusoids and lymph node sinuses. These interactions allow capture of viral particles at mucosal surfaces by these cells and subsequent transmission to permissive cells. HIV subverts the migration properties of dendritic cells to gain access to CD4+ T-cells in lymph nodes. Virus transmission to permissive T-cells occurs either in trans (without DCs infection, through viral capture and transmission), or in cis (following DCs productive infection, through the usual CD4-gp120 interaction), thereby inducing a robust infection. In trans infection, bound virions remain infectious over days and it is proposed that they are not degraded, but protected in non-lysosomal acidic organelles within the DCs close to the cell membrane thus contributing to the viral infectious potential during DCs' migration from the periphery to the lymphoid tissues. On arrival at lymphoid tissues, intact virions recycle back to DCs' cell surface allowing virus transmission to CD4+ T-cells. Its function is as follows. Acts as a class I viral fusion protein. Under the current model, the protein has at least 3 conformational states: pre-fusion native state, pre-hairpin intermediate state, and post-fusion hairpin state. During fusion of viral and target intracellular membranes, the coiled coil regions (heptad repeats) assume a trimer-of-hairpins structure, positioning the fusion peptide in close proximity to the C-terminal region of the ectodomain. The formation of this structure appears to drive apposition and subsequent fusion of viral and target cell membranes. Complete fusion occurs in host cell endosomes and is dynamin-dependent, however some lipid transfer might occur at the plasma membrane. The virus undergoes clathrin-dependent internalization long before endosomal fusion, thus minimizing the surface exposure of conserved viral epitopes during fusion and reducing the efficacy of inhibitors targeting these epitopes. Membranes fusion leads to delivery of the nucleocapsid into the cytoplasm. In Human immunodeficiency virus type 1 group M subtype J (isolate SE9173) (HIV-1), this protein is Envelope glycoprotein gp160.